An 856-amino-acid polypeptide reads, in one-letter code: Probable alpha,alpha-trehalose-phosphate synthase [UDP-forming] 8 (856 aa).

Position 5 is a phosphoserine (Ser5). Thr32 bears the Phosphothreonine mark. Positions 57-541 (ERKIIVANML…AKSFMQDLER (485 aa)) are glycosyltransferase.

The protein in the N-terminal section; belongs to the glycosyltransferase 20 family. In the C-terminal section; belongs to the trehalose phosphatase family. As to expression, expressed in leaves, roots, stems and flowers.

The catalysed reaction is D-glucose 6-phosphate + UDP-alpha-D-glucose = alpha,alpha-trehalose 6-phosphate + UDP + H(+). This chain is Probable alpha,alpha-trehalose-phosphate synthase [UDP-forming] 8 (TPS8), found in Arabidopsis thaliana (Mouse-ear cress).